The primary structure comprises 185 residues: Large ribosomal subunit protein uL5 (185 aa).

This sequence belongs to the universal ribosomal protein uL5 family. In terms of assembly, part of the 50S ribosomal subunit; part of the 5S rRNA/L5/L18/L25 subcomplex. Contacts the 5S rRNA and the P site tRNA. Forms a bridge to the 30S subunit in the 70S ribosome.

Its function is as follows. This is one of the proteins that bind and probably mediate the attachment of the 5S RNA into the large ribosomal subunit, where it forms part of the central protuberance. In the 70S ribosome it contacts protein S13 of the 30S subunit (bridge B1b), connecting the 2 subunits; this bridge is implicated in subunit movement. Contacts the P site tRNA; the 5S rRNA and some of its associated proteins might help stabilize positioning of ribosome-bound tRNAs. The protein is Large ribosomal subunit protein uL5 of Chelativorans sp. (strain BNC1).